The chain runs to 506 residues: Probable cytosol aminopeptidase (506 aa).

The Mn(2+) site is built by Lys278 and Asp283. Lys290 is an active-site residue. Mn(2+) is bound by residues Asp301, Asp360, and Glu362. Arg364 is an active-site residue.

This sequence belongs to the peptidase M17 family. Requires Mn(2+) as cofactor.

Its subcellular location is the cytoplasm. The catalysed reaction is Release of an N-terminal amino acid, Xaa-|-Yaa-, in which Xaa is preferably Leu, but may be other amino acids including Pro although not Arg or Lys, and Yaa may be Pro. Amino acid amides and methyl esters are also readily hydrolyzed, but rates on arylamides are exceedingly low.. It catalyses the reaction Release of an N-terminal amino acid, preferentially leucine, but not glutamic or aspartic acids.. Functionally, presumably involved in the processing and regular turnover of intracellular proteins. Catalyzes the removal of unsubstituted N-terminal amino acids from various peptides. In Ralstonia nicotianae (strain ATCC BAA-1114 / GMI1000) (Ralstonia solanacearum), this protein is Probable cytosol aminopeptidase.